Consider the following 58-residue polypeptide: Small ribosomal subunit protein bS21 (58 aa).

The interval 37–58 (FYEKPSVKRKKKSEAARKRKKF) is disordered. Residues 43–58 (VKRKKKSEAARKRKKF) show a composition bias toward basic residues.

Belongs to the bacterial ribosomal protein bS21 family.

The sequence is that of Small ribosomal subunit protein bS21 from Enterococcus faecalis (strain ATCC 700802 / V583).